Consider the following 330-residue polypeptide: Small ribosomal subunit protein uS15m (330 aa).

The protein belongs to the universal ribosomal protein uS15 family. In terms of assembly, component of the mitochondrial ribosome small subunit (28S) which comprises a 12S rRNA and about 30 distinct proteins.

It localises to the mitochondrion. The chain is Small ribosomal subunit protein uS15m (mrps-15) from Caenorhabditis elegans.